The following is a 162-amino-acid chain: uncharacterized protein (162 aa).

Helical transmembrane passes span 10-30, 50-70, 96-116, and 125-145; these read ILSF…MLIL, IVEL…ALYN, IAQY…IILL, and FTAI…LFIF.

Its subcellular location is the cell membrane. This is an uncharacterized protein from Methanocaldococcus jannaschii (strain ATCC 43067 / DSM 2661 / JAL-1 / JCM 10045 / NBRC 100440) (Methanococcus jannaschii).